The sequence spans 629 residues: Protein EDS1B (629 aa).

Ser123 serves as the catalytic Nucleophile. Active-site charge relay system residues include Asp187 and His317.

Interacts (via N-terminus) with PAD4 and SAG101. Part of a nuclear complex made of EDS1, PAD4 and SAG101, that can be redirected to the cytoplasm in the presence of an extranuclear form of EDS1. Does not interact with itself or with EDS1.

The protein localises to the nucleus. It localises to the cytoplasm. Functionally, acts as a second functional copy of EDS1. Can mediate HRT-mediated resistance to turnip crinkle virus. The chain is Protein EDS1B (EDS1B) from Arabidopsis thaliana (Mouse-ear cress).